The sequence spans 765 residues: Glycine--tRNA ligase (765 aa).

The transit peptide at 1 to 87 (MSLQLLKALP…LRSAAAEFIM (87 aa)) directs the protein to the mitochondrion. Residues 41–73 (TTTKPTPSAPPPPPPTQPQQPAATTSWGTKKQN) form a disordered region. Residues 47 to 58 (PSAPPPPPPTQP) show a composition bias toward pro residues. In terms of domain architecture, WHEP-TRS spans 95-151 (QLAPLRERVQEQGNLVRDLKAKGAPEIDVKKAVAELKARKKLLEDKELALTPSVVSF). A glycine-binding site is contributed by glutamate 331. ATP-binding positions include 363-365 (RNE) and 374-375 (RV). Glycine is bound at residue glutamate 382. 489 to 490 (EC) provides a ligand contact to ATP. Residue 609–611 (EPS) participates in glycine binding. Arginine 616 is an ATP binding site.

It belongs to the class-II aminoacyl-tRNA synthetase family. Homodimer.

Its subcellular location is the mitochondrion. The protein localises to the cytoplasm. It localises to the cell projection. The protein resides in the axon. It catalyses the reaction 2 ATP + H(+) = P(1),P(4)-bis(5'-adenosyl) tetraphosphate + diphosphate. It carries out the reaction tRNA(Gly) + glycine + ATP = glycyl-tRNA(Gly) + AMP + diphosphate. Catalyzes the ATP-dependent ligation of glycine to the 3'-end of its cognate tRNA, via the formation of an aminoacyl-adenylate intermediate (Gly-AMP). Also produces diadenosine tetraphosphate (Ap4A), a universal pleiotropic signaling molecule needed for cell regulation pathways, by direct condensation of 2 ATPs. Thereby, may play a special role in Ap4A homeostasis. Required for terminal arborization of both dendrites and axons during development. This Drosophila melanogaster (Fruit fly) protein is Glycine--tRNA ligase.